The primary structure comprises 457 residues: MSSTMKDTQEAPVRWSRNWTPDAIRALVDQDNGKLDARIYADQDLYQLELERVFGRSWLMLGHETHIPKIGDYLTTYMGEDPVIMVRQKDQSIKVFLNQCRHRGMRIVRSDGGNAKAFTCTYHGWAYDIAGNLVNVPFEKEAFCDKKEGDCGFDKADWGPLQARVETYKGLVFANWDPEAPDLKTYLSDAMPYMDVMLDRTEAGTEAIGGIQKWVIPCNWKFAAEQFCSDMYHAGTMSHLSGVLAGLPPEMDLTQIQLSKNGNQFRSAWGGHGAGWFINDSSILLSVVGPKITQYWTQGPAAEKAARRVPQLPILDMFGQHMTVFPTCSFLPGINTIRTWHPRGPNEVEVWAFVLVDADAPEDIKEEFRLQNIRTFNAGGVFEQDDGENWVEIQRVMRGHKAKSTSLCAKMGLNVPNKNNPAYPGKTAYVYAEEAARGMYHHWSRMMSEPSWDTLKP.

One can recognise a Rieske domain in the interval 58–174 (WLMLGHETHI…VETYKGLVFA (117 aa)). The [2Fe-2S] cluster site is built by Cys100, His102, Cys120, and His123. Residues His233 and His239 each coordinate Fe cation.

It belongs to the bacterial ring-hydroxylating dioxygenase alpha subunit family. As to quaternary structure, heterohexamer consisting of three BphA subunits and three BphE subunits. A ferredoxin (BphF) and a ferredoxin reductase (BphG) must be present to obtain activity. [2Fe-2S] cluster serves as cofactor. The cofactor is Fe cation.

The catalysed reaction is biphenyl + NADH + O2 + H(+) = (2R,3S)-3-phenylcyclohexa-3,5-diene-1,2-diol + NAD(+). It functions in the pathway xenobiotic degradation; biphenyl degradation; 2-hydroxy-2,4-pentadienoate and benzoate from biphenyl: step 1/4. This is Biphenyl dioxygenase subunit alpha (bphA) from Comamonas testosteroni (Pseudomonas testosteroni).